A 452-amino-acid polypeptide reads, in one-letter code: MSKKVFIKTYGCQMNEYDSDKMSDVLGAAQGYEPTDNVEEADLILFNTCSVREKAQEKVFSDLGRVKHLKKKGALIGVGGCVASQEGAAIIERAPYVDVVFGPQTLHRLPQLLAERERLNRSQVDISFPEIEKFDHLPPARVEGASAFVSIMEGCSKYCSYCVVPYTRGEEVSRPFEDVLVEVAGLADQGVKEITLLGQNVNAWRSRMIGAASALSSEMADFATLLEYVSDIPGIERIRYVTSHPNEFTPSLIAAYDKLPKLVSHLHLPVQHGSDRILMAMKRGYTAMEYKSTVRKLRAIRPDMALSSDFIVGFPGETEDDFSKMMKLIDDVGFDNSFSFIFSPRPGTPAANLHDDTPHEVKLRRLQHLQTVINDSIKRISESRLGTVQRILVEGASKRDSTELMGRTECNRVVNFCGQPRLIGQMVDVAITETRSFTLRGEVVTQNEVLTG.

An MTTase N-terminal domain is found at 3 to 118; the sequence is KKVFIKTYGC…LPQLLAERER (116 aa). Residues Cys12, Cys49, Cys81, Cys155, Cys159, and Cys162 each coordinate [4Fe-4S] cluster. The Radical SAM core domain maps to 141–379; sequence RVEGASAFVS…QTVINDSIKR (239 aa). Residues 382-445 form the TRAM domain; that stretch reads ESRLGTVQRI…SFTLRGEVVT (64 aa).

The protein belongs to the methylthiotransferase family. MiaB subfamily. In terms of assembly, monomer. [4Fe-4S] cluster is required as a cofactor.

It is found in the cytoplasm. The catalysed reaction is N(6)-dimethylallyladenosine(37) in tRNA + (sulfur carrier)-SH + AH2 + 2 S-adenosyl-L-methionine = 2-methylsulfanyl-N(6)-dimethylallyladenosine(37) in tRNA + (sulfur carrier)-H + 5'-deoxyadenosine + L-methionine + A + S-adenosyl-L-homocysteine + 2 H(+). Functionally, catalyzes the methylthiolation of N6-(dimethylallyl)adenosine (i(6)A), leading to the formation of 2-methylthio-N6-(dimethylallyl)adenosine (ms(2)i(6)A) at position 37 in tRNAs that read codons beginning with uridine. This Albidiferax ferrireducens (strain ATCC BAA-621 / DSM 15236 / T118) (Rhodoferax ferrireducens) protein is tRNA-2-methylthio-N(6)-dimethylallyladenosine synthase.